We begin with the raw amino-acid sequence, 91 residues long: Large ribosomal subunit protein bL27 (91 aa).

The disordered stretch occupies residues 1–22 (MAHKKAGGSSRNGRDSAGRRLG).

This sequence belongs to the bacterial ribosomal protein bL27 family.

This chain is Large ribosomal subunit protein bL27, found in Methylocella silvestris (strain DSM 15510 / CIP 108128 / LMG 27833 / NCIMB 13906 / BL2).